The chain runs to 360 residues: S-adenosylmethionine:tRNA ribosyltransferase-isomerase (360 aa).

The protein belongs to the QueA family. As to quaternary structure, monomer.

The protein localises to the cytoplasm. It carries out the reaction 7-aminomethyl-7-carbaguanosine(34) in tRNA + S-adenosyl-L-methionine = epoxyqueuosine(34) in tRNA + adenine + L-methionine + 2 H(+). It participates in tRNA modification; tRNA-queuosine biosynthesis. Its function is as follows. Transfers and isomerizes the ribose moiety from AdoMet to the 7-aminomethyl group of 7-deazaguanine (preQ1-tRNA) to give epoxyqueuosine (oQ-tRNA). This Rhodopseudomonas palustris (strain ATCC BAA-98 / CGA009) protein is S-adenosylmethionine:tRNA ribosyltransferase-isomerase.